A 285-amino-acid polypeptide reads, in one-letter code: Probable endonuclease 4 (285 aa).

Residues His-67, His-107, Glu-144, Asp-177, His-180, His-214, Asp-227, His-229, and Glu-259 each contribute to the Zn(2+) site.

Belongs to the AP endonuclease 2 family. The cofactor is Zn(2+).

It carries out the reaction Endonucleolytic cleavage to 5'-phosphooligonucleotide end-products.. Its function is as follows. Endonuclease IV plays a role in DNA repair. It cleaves phosphodiester bonds at apurinic or apyrimidinic (AP) sites, generating a 3'-hydroxyl group and a 5'-terminal sugar phosphate. This Persephonella marina (strain DSM 14350 / EX-H1) protein is Probable endonuclease 4.